The primary structure comprises 199 residues: Pyridoxal 5'-phosphate synthase subunit PdxT (199 aa).

Residue 47–49 (GES) participates in L-glutamine binding. Cysteine 79 functions as the Nucleophile in the catalytic mechanism. Residues arginine 106 and 133-134 (IR) each bind L-glutamine. Catalysis depends on charge relay system residues histidine 169 and glutamate 171.

This sequence belongs to the glutaminase PdxT/SNO family. In terms of assembly, in the presence of PdxS, forms a dodecamer of heterodimers. Only shows activity in the heterodimer.

It carries out the reaction aldehydo-D-ribose 5-phosphate + D-glyceraldehyde 3-phosphate + L-glutamine = pyridoxal 5'-phosphate + L-glutamate + phosphate + 3 H2O + H(+). The enzyme catalyses L-glutamine + H2O = L-glutamate + NH4(+). Its pathway is cofactor biosynthesis; pyridoxal 5'-phosphate biosynthesis. Catalyzes the hydrolysis of glutamine to glutamate and ammonia as part of the biosynthesis of pyridoxal 5'-phosphate. The resulting ammonia molecule is channeled to the active site of PdxS. This Desulfitobacterium hafniense (strain DSM 10664 / DCB-2) protein is Pyridoxal 5'-phosphate synthase subunit PdxT.